The sequence spans 606 residues: Phosphogluconate dehydratase (606 aa).

The [4Fe-4S] cluster site is built by Cys156 and Cys223.

This sequence belongs to the IlvD/Edd family. It depends on [4Fe-4S] cluster as a cofactor.

It carries out the reaction 6-phospho-D-gluconate = 2-dehydro-3-deoxy-6-phospho-D-gluconate + H2O. It participates in carbohydrate metabolism; Entner-Doudoroff pathway. Its function is as follows. Catalyzes the dehydration of 6-phospho-D-gluconate to 2-dehydro-3-deoxy-6-phospho-D-gluconate. This is Phosphogluconate dehydratase from Rhizobium meliloti (strain 1021) (Ensifer meliloti).